An 890-amino-acid polypeptide reads, in one-letter code: Wolframin (890 aa).

Methionine 1 is modified (N-acetylmethionine). The disordered stretch occupies residues 1–86 (MDSNTAPLGP…TGPTKGDMEI (86 aa)). Residues 1–321 (MDSNTAPLGP…MHWLSTIIPT (321 aa)) form an interaction with ATP6V1A region. Residues 10-20 (PSCPQPPPAPQ) are compositionally biased toward pro residues. At threonine 30 the chain carries Phosphothreonine; by FAM20C. At serine 32 the chain carries Phosphoserine; by FAM20C. Serine 157 carries the phosphoserine modification. 10 helical membrane-spanning segments follow: residues 314–334 (WLST…FIVS), 340–360 (FFAF…MVIC), 402–422 (LEPY…FPIA), 427–447 (IPCS…YLSL), 465–485 (AGLL…KVLG), 496–516 (LVVL…YLFF), 529–549 (CYLV…VILL), 563–583 (YFLF…VGVL), 589–609 (FTSL…VPLL), and 632–652 (MVKL…FYVY). Topologically, residues 653–869 (RSEGMKVYNS…HVKIEHDWRS (217 aa)) are lumenal. N-linked (GlcNAc...) asparagine glycans are attached at residues asparagine 661 and asparagine 746. The helical transmembrane segment at 870–890 (TVHGAVKFAFDFFFFPFLSAA) threads the bilayer.

Interacts with ATP6V1A. In terms of tissue distribution, highly expressed in heart followed by brain, placenta, lung and pancreas. Weakly expressed in liver, kidney and skeletal muscle. Also expressed in islet and beta-cell insulinoma cell line.

It localises to the endoplasmic reticulum membrane. The protein localises to the cytoplasmic vesicle. The protein resides in the secretory vesicle. Participates in the regulation of cellular Ca(2+) homeostasis, at least partly, by modulating the filling state of the endoplasmic reticulum Ca(2+) store. Negatively regulates the ER stress response and positively regulates the stability of V-ATPase subunits ATP6V1A and ATP1B1 by preventing their degradation through an unknown proteasome-independent mechanism. The sequence is that of Wolframin (WFS1) from Homo sapiens (Human).